We begin with the raw amino-acid sequence, 483 residues long: MVTQTNPVPVTYPTDAYIPTYLPDDKVSNLADLKKLIEMDSRLDLYLTRRRLDTSINLPTNTKTKDHPPNKEMLRIYVYNTTESSPRSDSGTPADSGKTTWTLRIEGKLLHESANGKHPFSEFLEGVAVDFKRLKPLGMGKKRKRDSSLSLPLNLQQPEYNDQDSTMGDNDNGEDEDSAEAESREEIVDALEWNYDENNVVEFDGIDIKRQGKDNLRCSITIQLRGVDGGKVQYSPNLATLIGMQTGSVNDAVYSIYKYILINNLFVTEQTEAQDGSNDAEDSSNENNNKNGAGDDDGVEGSTPKDKPELGEVKLDSLLQKVLDTNAAHLPLMNVVQTVNKLVSPLPPIILDYTIDLSKDTTYGATTLDVDVSHILHQPQPQPNLQKEEETDAEDTAKLREITKLALQLNSSAQKYQFFHELSLHPRETLTHYLWSSKQNELVLQGDQYFNEDAARTSDIYSNNNNDRSLMGNISLLYSQGRL.

Disordered regions lie at residues 142 to 183 and 273 to 309; these read KRKR…EAES and AQDG…DKPE. Residues 148–158 show a composition bias toward low complexity; that stretch reads SLSLPLNLQQP. The span at 171-180 shows a compositional bias: acidic residues; it reads DNGEDEDSAE.

To yeast SNF12. As to quaternary structure, interacts directly with RSC8. Component of the two forms of the RSC complex composed of at least either RSC1 or RSC2, and ARP7, ARP9, LDB7, NPL6, RSC3, RSC30, RSC4, RSC58, RSC6, RSC8, RSC9, SFH1, STH1, HTL1 and probably RTT102. The complexes interact with histone and histone variant components of centromeric chromatin.

It localises to the nucleus. In terms of biological role, component of the chromatin structure-remodeling complex (RSC), which is involved in transcription regulation and nucleosome positioning. RSC is responsible for the transfer of a histone octamer from a nucleosome core particle to naked DNA. The reaction requires ATP and involves an activated RSC-nucleosome intermediate. Remodeling reaction also involves DNA translocation, DNA twist and conformational change. As a reconfigurer of centromeric and flanking nucleosomes, RSC complex is required both for proper kinetochore function in chromosome segregation and, via a PKC1-dependent signaling pathway, for organization of the cellular cytoskeleton. This subunit is essential for mitotic growth and suppresses formamide sensitivity of the RSC8 mutants. This chain is Chromatin structure-remodeling complex protein RSC6 (RSC6), found in Saccharomyces cerevisiae (strain ATCC 204508 / S288c) (Baker's yeast).